Consider the following 278-residue polypeptide: tRNA pseudouridine synthase A (278 aa).

The active-site Nucleophile is the aspartate 52. Tyrosine 111 serves as a coordination point for substrate. Residues 253 to 264 (AKAGPLEAAPLG) are compositionally biased toward low complexity. The disordered stretch occupies residues 253–278 (AKAGPLEAAPLGEAPLKEATLKEDWR). Over residues 267-278 (PLKEATLKEDWR) the composition is skewed to basic and acidic residues.

The protein belongs to the tRNA pseudouridine synthase TruA family. As to quaternary structure, homodimer.

It carries out the reaction uridine(38/39/40) in tRNA = pseudouridine(38/39/40) in tRNA. Functionally, formation of pseudouridine at positions 38, 39 and 40 in the anticodon stem and loop of transfer RNAs. The chain is tRNA pseudouridine synthase A from Rhodospirillum rubrum (strain ATCC 11170 / ATH 1.1.1 / DSM 467 / LMG 4362 / NCIMB 8255 / S1).